Here is a 46-residue protein sequence, read N- to C-terminus: Endochitinase 4 (46 aa).

Belongs to the glycosyl hydrolase 19 family. Chitinase class I subfamily.

It carries out the reaction Random endo-hydrolysis of N-acetyl-beta-D-glucosaminide (1-&gt;4)-beta-linkages in chitin and chitodextrins.. In terms of biological role, defense against chitin-containing fungal and bacterial pathogens. The chain is Endochitinase 4 from Arachis hypogaea (Peanut).